A 165-amino-acid chain; its full sequence is uncharacterized protein (165 aa).

This is an uncharacterized protein from Acanthamoeba polyphaga mimivirus (APMV).